A 270-amino-acid chain; its full sequence is Ribosomal RNA-processing protein 7 homolog (270 aa).

Residues 233–268 (TFQIKKNRQEKAQELLKKFEEDRKRITQLKQARNFK) are a coiled coil.

This sequence belongs to the RRP7 family.

This Caenorhabditis elegans protein is Ribosomal RNA-processing protein 7 homolog.